The sequence spans 698 residues: Elongation factor G 1 (698 aa).

The 283-residue stretch at E8–V290 folds into the tr-type G domain. GTP contacts are provided by residues A17–T24, D88–H92, and N142–D145.

This sequence belongs to the TRAFAC class translation factor GTPase superfamily. Classic translation factor GTPase family. EF-G/EF-2 subfamily.

It localises to the cytoplasm. Catalyzes the GTP-dependent ribosomal translocation step during translation elongation. During this step, the ribosome changes from the pre-translocational (PRE) to the post-translocational (POST) state as the newly formed A-site-bound peptidyl-tRNA and P-site-bound deacylated tRNA move to the P and E sites, respectively. Catalyzes the coordinated movement of the two tRNA molecules, the mRNA and conformational changes in the ribosome. The sequence is that of Elongation factor G 1 from Shewanella sp. (strain MR-4).